The following is a 461-amino-acid chain: Deoxyguanosinetriphosphate triphosphohydrolase-like protein (461 aa).

The interval 22-41 (ERFLPDPPREKDNRPPFRRD) is disordered. The span at 24-41 (FLPDPPREKDNRPPFRRD) shows a compositional bias: basic and acidic residues. The HD domain maps to 72–285 (RLTHSLEVAQ…MELADDIAYG (214 aa)).

It belongs to the dGTPase family. Type 2 subfamily.

This chain is Deoxyguanosinetriphosphate triphosphohydrolase-like protein, found in Haemophilus influenzae (strain PittEE).